A 325-amino-acid polypeptide reads, in one-letter code: MATVKKVLPRRLVGLATLRAVSTSSVGTFPKQVKIVEVGPRDGLQNEKNIVPTPVKIKLIDMLSEAGLPVVEATSFVSPKWVPQMADHAEVLKGIQKFPGVNYPVLTPNFKGFQAAVAAGAKEVAIFGAASELFTKKNINCSIDESLQRFDEILKAARAAGISVRGYVSCVLGCPYEGKISPAKVAEVTKKLYSMGCYEISLGDTIGVGTPGAMKDMLSAVLQEVPVTALAVHCHDTYGQALANTLTALQMGVSVMDSSVAGLGGCPYAQGASGNLATEDLVYMLAGLGIHTGVNLQKLLEAGAFICQALNRRTNSKVAQATCKL.

The N-terminal 27 residues, 1 to 27, are a transit peptide targeting the mitochondrion; it reads MATVKKVLPRRLVGLATLRAVSTSSVG. Positions 33 to 300 constitute a Pyruvate carboxyltransferase domain; sequence VKIVEVGPRD…HTGVNLQKLL (268 aa). Residue Arg41 coordinates substrate. A divalent metal cation is bound at residue Asp42. Lys48 bears the N6-acetyllysine; alternate mark. Residue Lys48 is modified to N6-succinyllysine; alternate. An N6-acetyllysine modification is found at Lys111. An N6-acetyllysine; alternate mark is found at Lys137 and Lys179. Residues Lys137 and Lys179 each carry the N6-succinyllysine; alternate modification. His233 and His235 together coordinate a divalent metal cation. Cys266 is an active-site residue. Asn275 contributes to the a divalent metal cation binding site. The Microbody targeting signal motif lies at 323–325; the sequence is CKL. At Lys324 the chain carries N6-acetyllysine.

It belongs to the HMG-CoA lyase family. In terms of assembly, homodimer; disulfide-linked. Can also form homotetramers.

The protein resides in the mitochondrion matrix. The protein localises to the peroxisome. It carries out the reaction (3S)-3-hydroxy-3-methylglutaryl-CoA = acetoacetate + acetyl-CoA. It functions in the pathway metabolic intermediate metabolism; (S)-3-hydroxy-3-methylglutaryl-CoA degradation; acetoacetate from (S)-3-hydroxy-3-methylglutaryl-CoA: step 1/1. In terms of biological role, mitochondrial 3-hydroxy-3-methylglutaryl-CoA lyase that catalyzes a cation-dependent cleavage of (S)-3-hydroxy-3-methylglutaryl-CoA into acetyl-CoA and acetoacetate, a key step in ketogenesis. Terminal step in leucine catabolism. Ketone bodies (beta-hydroxybutyrate, acetoacetate and acetone) are essential as an alternative source of energy to glucose, as lipid precursors and as regulators of metabolism. This is Hydroxymethylglutaryl-CoA lyase, mitochondrial (HMGCL) from Bos taurus (Bovine).